Here is a 147-residue protein sequence, read N- to C-terminus: Sec-independent protein translocase protein TatB (147 aa).

A helical membrane pass occupies residues 2 to 22 (FSSIGWPEIFTVLILGLIIIG). The interval 96 to 147 (FDPKKIMASGTEGEAYRERGINPQPAGDSASPQTPSNKESQPKAGFSWDDIT) is disordered. Over residues 125–134 (ASPQTPSNKE) the composition is skewed to polar residues.

It belongs to the TatB family. The Tat system comprises two distinct complexes: a TatABC complex, containing multiple copies of TatA, TatB and TatC subunits, and a separate TatA complex, containing only TatA subunits. Substrates initially bind to the TatABC complex, which probably triggers association of the separate TatA complex to form the active translocon.

The protein resides in the cell membrane. In terms of biological role, part of the twin-arginine translocation (Tat) system that transports large folded proteins containing a characteristic twin-arginine motif in their signal peptide across membranes. Together with TatC, TatB is part of a receptor directly interacting with Tat signal peptides. TatB may form an oligomeric binding site that transiently accommodates folded Tat precursor proteins before their translocation. The protein is Sec-independent protein translocase protein TatB of Corynebacterium diphtheriae (strain ATCC 700971 / NCTC 13129 / Biotype gravis).